We begin with the raw amino-acid sequence, 384 residues long: N-acetylneuraminate epimerase (384 aa).

An N-terminal signal peptide occupies residues 1–29 (MGMQMKNFKKMMTLMALCLSVAITTSGYA). Kelch repeat units follow at residues 51-95 (VIYV…VFLN), 97-149 (KLYV…VKLN), 151-184 (TMVL…KVIY), 185-230 (NYFN…VMEN), 233-282 (LMLI…LAGA), 304-353 (QNYT…SYGD), and 355-384 (VFLI…LLIK). Catalysis depends on Glu-239, which acts as the Proton acceptor.

It belongs to the NanM family. Homodimer.

The protein resides in the periplasm. The catalysed reaction is N-acetyl-alpha-neuraminate = N-acetyl-beta-neuraminate. Functionally, converts alpha-N-acetylneuranimic acid (Neu5Ac) to the beta-anomer, accelerating the equilibrium between the alpha- and beta-anomers. Probably facilitates sialidase-negative bacteria to compete successfully for limited amounts of extracellular Neu5Ac, which is likely taken up in the beta-anomer. In addition, the rapid removal of sialic acid from solution might be advantageous to the bacterium to damp down host responses. The polypeptide is N-acetylneuraminate epimerase (Salmonella typhi).